A 535-amino-acid chain; its full sequence is Phosphoenolpyruvate carboxykinase (ATP) 1 (535 aa).

Substrate contacts are provided by Arg-58, Tyr-193, and Lys-199. Residues Lys-199, His-218, and 234–242 contribute to the ATP site; that span reads GLSGTGKTT. Mn(2+) is bound by residues Lys-199 and His-218. Asp-255 contributes to the Mn(2+) binding site. ATP-binding positions include Glu-283, Arg-321, 440–441, and Thr-446; that span reads RI. Arg-321 lines the substrate pocket.

Belongs to the phosphoenolpyruvate carboxykinase (ATP) family. It depends on Mn(2+) as a cofactor.

It localises to the cytoplasm. It carries out the reaction oxaloacetate + ATP = phosphoenolpyruvate + ADP + CO2. The protein operates within carbohydrate biosynthesis; gluconeogenesis. In terms of biological role, involved in the gluconeogenesis. Catalyzes the conversion of oxaloacetate (OAA) to phosphoenolpyruvate (PEP) through direct phosphoryl transfer between the nucleoside triphosphate and OAA. In Salinibacter ruber (strain DSM 13855 / M31), this protein is Phosphoenolpyruvate carboxykinase (ATP) 1.